Consider the following 577-residue polypeptide: Galectin-3-binding protein (577 aa).

The N-terminal stretch at 1–18 (MALLWLLSVFLLVPGTQG) is a signal peptide. In terms of domain architecture, SRCR spans 24–124 (MRLVNGASAN…HEKDAGVVCS (101 aa)). 3 disulfide bridges follow: Cys49–Cys113, Cys62–Cys123, and Cys93–Cys103. The N-linked (GlcNAc...) asparagine glycan is linked to Asn69. Asn125 carries an N-linked (GlcNAc...) asparagine glycan. The BTB domain maps to 153-221 (CDLFIQVTGQ…FYSRRIEVSM (69 aa)). Positions 260-360 (PLDLYAYARA…MLPQELFELQ (101 aa)) constitute a BACK domain. Residues Asn362, Asn398, Asn543, and Asn572 are each glycosylated (N-linked (GlcNAc...) asparagine).

Homodimers and homomultimers. The multimers form ring-like structures with a diameter of 30-40 nm. Binds LGALS1 and LGALS3. Binds ITGB1, COL4A1, COL5A1, COL6A1, FN1 and NID. Interacts with PPIC (in vitro). The unglycosylated form interacts with PDE4DIP isoform 2/MMG8/SMYLE; this interaction may connect a pericentrosomal complex to the gamma-tubulin ring complex (gamma-TuRC) to promote microtubule assembly and acetylation. In terms of processing, N-glycosylated. As to expression, detected in embryo, liver, spleen, kidney, lung, heart, intestine, thymus and lymph node.

It localises to the secreted. Its subcellular location is the extracellular space. The protein localises to the extracellular matrix. In terms of biological role, promotes integrin-mediated cell adhesion. May stimulate host defense against viruses and tumor cells. The sequence is that of Galectin-3-binding protein (Lgals3bp) from Mus musculus (Mouse).